The primary structure comprises 270 residues: DNA adenine methylase (270 aa).

Trp-10, Lys-14, Asp-54, and Asp-181 together coordinate S-adenosyl-L-methionine.

This sequence belongs to the N(4)/N(6)-methyltransferase family.

It catalyses the reaction a 2'-deoxyadenosine in DNA + S-adenosyl-L-methionine = an N(6)-methyl-2'-deoxyadenosine in DNA + S-adenosyl-L-homocysteine + H(+). In terms of biological role, an alpha subtype methylase, recognizes the double-stranded sequence 5'-GATC-3' and methylates A-2. Overexpression leads to hypermutability. May be involved in methyl-directed DNA mismatch repair, initiation of chromosome replication and gene expression. The sequence is that of DNA adenine methylase from Serratia marcescens.